Consider the following 240-residue polypeptide: DNA repair protein RecO (240 aa).

The protein belongs to the RecO family.

Its function is as follows. Involved in DNA repair and RecF pathway recombination. The protein is DNA repair protein RecO of Xanthomonas euvesicatoria pv. vesicatoria (strain 85-10) (Xanthomonas campestris pv. vesicatoria).